Consider the following 156-residue polypeptide: 3-hydroxyacyl-[acyl-carrier-protein] dehydratase FabZ (156 aa).

The active site involves H57.

This sequence belongs to the thioester dehydratase family. FabZ subfamily.

It is found in the cytoplasm. The enzyme catalyses a (3R)-hydroxyacyl-[ACP] = a (2E)-enoyl-[ACP] + H2O. Its function is as follows. Involved in unsaturated fatty acids biosynthesis. Catalyzes the dehydration of short chain beta-hydroxyacyl-ACPs and long chain saturated and unsaturated beta-hydroxyacyl-ACPs. The protein is 3-hydroxyacyl-[acyl-carrier-protein] dehydratase FabZ of Anaeromyxobacter dehalogenans (strain 2CP-C).